The following is a 667-amino-acid chain: Fermitin family homolog 3 (667 aa).

The residue at position 8 (S8) is a Phosphoserine. A Phosphotyrosine modification is found at Y11. The region spanning 229-558 (WLDSSRCLMQ…SLPDFGISYV (330 aa)) is the FERM domain. The PH domain occupies 354–457 (DHLRIFRIPR…WMAGCRLASK (104 aa)). Y504 is modified (phosphotyrosine). Residue T591 is modified to Phosphothreonine.

The protein belongs to the kindlin family. In terms of assembly, interacts with ITGB1, ITGB2 and ITGB3 (via cytoplasmic tails). Highly expressed in lymph node. Expressed in thymus, spleen and leukocytes. Weakly expressed in placenta, small intestine, stomach, testis and lung. Overexpressed in B-cell malignancies.

It localises to the cell projection. The protein resides in the podosome. Functionally, plays a central role in cell adhesion in hematopoietic cells. Acts by activating the integrin beta-1-3 (ITGB1, ITGB2 and ITGB3). Required for integrin-mediated platelet adhesion and leukocyte adhesion to endothelial cells. Required for activation of integrin beta-2 (ITGB2) in polymorphonuclear granulocytes (PMNs). Its function is as follows. Isoform 2 may act as a repressor of NF-kappa-B and apoptosis. In Homo sapiens (Human), this protein is Fermitin family homolog 3 (FERMT3).